The primary structure comprises 869 residues: Dynamin-3 (869 aa).

One can recognise a Dynamin-type G domain in the interval 28 to 294 (LLELPQIAVV…LTNHIRDTLP (267 aa)). The interval 38 to 45 (GGQSAGKS) is G1 motif. 38 to 46 (GGQSAGKSS) contributes to the GTP binding site. The tract at residues 64-66 (VTR) is G2 motif. The interval 136 to 139 (DLPG) is G3 motif. The tract at residues 205–208 (TKLD) is G4 motif. 205-211 (TKLDLMD) is a binding site for GTP. Residue Tyr-231 is modified to Phosphotyrosine. The segment at 235–238 (VNRS) is G5 motif. 236 to 239 (NRSQ) is a binding site for GTP. At Lys-299 the chain carries N6-acetyllysine. The PH domain occupies 515–621 (QGTNLPPSRQ…ACDSQEDVDS (107 aa)). Position 603 is a phosphotyrosine (Tyr-603). Lys-604 is modified (N6-acetyllysine). Residues 659–750 (VETIRNLVDS…IIGDISTATV (92 aa)) form the GED domain. A disordered region spans residues 747–869 (TATVSTPAPP…IRPLESSLLD (123 aa)). Phosphoserine is present on residues Ser-769 and Ser-773. Composition is skewed to pro residues over residues 797–822 (PAIP…PPFP) and 832–855 (PQVP…PSPT). At Ser-853 the chain carries Phosphoserine.

It belongs to the TRAFAC class dynamin-like GTPase superfamily. Dynamin/Fzo/YdjA family.

It is found in the cytoplasm. The protein localises to the cytoskeleton. The catalysed reaction is GTP + H2O = GDP + phosphate + H(+). Its function is as follows. Microtubule-associated force-producing protein involved in producing microtubule bundles and able to bind and hydrolyze GTP. Most probably involved in vesicular trafficking processes, in particular endocytosis. This is Dynamin-3 (DNM3) from Homo sapiens (Human).